Consider the following 153-residue polypeptide: Transcriptional repressor NrdR (153 aa).

A zinc finger spans residues 3–34 (CPSCHHSGTRVLESRPVEEGRSIRRRRECEQC). In terms of domain architecture, ATP-cone spans 49 to 139 (LIVVKKEGTR…VYRQFKDINV (91 aa)).

It belongs to the NrdR family. Zn(2+) serves as cofactor.

Functionally, negatively regulates transcription of bacterial ribonucleotide reductase nrd genes and operons by binding to NrdR-boxes. The sequence is that of Transcriptional repressor NrdR from Geobacillus kaustophilus (strain HTA426).